We begin with the raw amino-acid sequence, 366 residues long: uncharacterized protein (366 aa).

An OBG-type G domain is found at glycine 64–asparagine 289. GTP-binding positions include glycine 70–serine 77, aspartate 116–isoleucine 120, and asparagine 247–aspartate 250. Positions asparagine 289–lysine 365 constitute a TGS domain.

The protein belongs to the TRAFAC class OBG-HflX-like GTPase superfamily. OBG GTPase family.

This is an uncharacterized protein from Schizosaccharomyces pombe (strain 972 / ATCC 24843) (Fission yeast).